The sequence spans 614 residues: Glutamyl-tRNA(Gln) amidotransferase subunit E (614 aa).

The protein belongs to the GatB/GatE family. GatE subfamily. Heterodimer of GatD and GatE.

The catalysed reaction is L-glutamyl-tRNA(Gln) + L-glutamine + ATP + H2O = L-glutaminyl-tRNA(Gln) + L-glutamate + ADP + phosphate + H(+). Its function is as follows. Allows the formation of correctly charged Gln-tRNA(Gln) through the transamidation of misacylated Glu-tRNA(Gln) in organisms which lack glutaminyl-tRNA synthetase. The reaction takes place in the presence of glutamine and ATP through an activated gamma-phospho-Glu-tRNA(Gln). The GatDE system is specific for glutamate and does not act on aspartate. The sequence is that of Glutamyl-tRNA(Gln) amidotransferase subunit E from Methanospirillum hungatei JF-1 (strain ATCC 27890 / DSM 864 / NBRC 100397 / JF-1).